The chain runs to 346 residues: Phosphoribosylformylglycinamidine cyclo-ligase (346 aa).

This sequence belongs to the AIR synthase family.

The protein resides in the cytoplasm. It carries out the reaction 2-formamido-N(1)-(5-O-phospho-beta-D-ribosyl)acetamidine + ATP = 5-amino-1-(5-phospho-beta-D-ribosyl)imidazole + ADP + phosphate + H(+). It functions in the pathway purine metabolism; IMP biosynthesis via de novo pathway; 5-amino-1-(5-phospho-D-ribosyl)imidazole from N(2)-formyl-N(1)-(5-phospho-D-ribosyl)glycinamide: step 2/2. The polypeptide is Phosphoribosylformylglycinamidine cyclo-ligase (Geobacillus kaustophilus (strain HTA426)).